The following is a 369-amino-acid chain: NAD(P)H-quinone oxidoreductase subunit 1, chloroplastic (369 aa).

The next 8 membrane-spanning stretches (helical) occupy residues 29–49 (IWII…VLVI), 97–117 (IWLF…SYLV), 129–149 (LGIG…GLLM), 167–187 (AAQS…ISLL), 205–225 (LLGW…ISSL), 255–275 (FGLF…FVTV), 305–325 (IINA…FLFV), and 348–368 (FLLP…ILLL).

Belongs to the complex I subunit 1 family. In terms of assembly, NDH is composed of at least 16 different subunits, 5 of which are encoded in the nucleus.

The protein localises to the plastid. It localises to the chloroplast thylakoid membrane. The enzyme catalyses a plastoquinone + NADH + (n+1) H(+)(in) = a plastoquinol + NAD(+) + n H(+)(out). The catalysed reaction is a plastoquinone + NADPH + (n+1) H(+)(in) = a plastoquinol + NADP(+) + n H(+)(out). NDH shuttles electrons from NAD(P)H:plastoquinone, via FMN and iron-sulfur (Fe-S) centers, to quinones in the photosynthetic chain and possibly in a chloroplast respiratory chain. The immediate electron acceptor for the enzyme in this species is believed to be plastoquinone. Couples the redox reaction to proton translocation, and thus conserves the redox energy in a proton gradient. This is NAD(P)H-quinone oxidoreductase subunit 1, chloroplastic from Angiopteris evecta (Mule's foot fern).